The following is a 56-amino-acid chain: Large ribosomal subunit protein bL33 (56 aa).

This sequence belongs to the bacterial ribosomal protein bL33 family.

The chain is Large ribosomal subunit protein bL33 from Vibrio campbellii (strain ATCC BAA-1116).